Reading from the N-terminus, the 431-residue chain is MGTHINFNNLGGGGHPGGEGSSNQMKPTGSVMPLARQSSVYSLTFDELQNTLGGPGKDFGSMNMDELLKSIWTAEEAQAMAMTSAPAATAVAQPGAGIPPPGGNLQRQGSLTLPRTISQKTVDEVWKCLITKDGNMEGSSGGGGESNVPPGRQQTLGEMTLEEFLFRAGVVREDNCVQQMGQVNGNNNNGFYGNSTAAGGLGFGFGQPNQNSITFNGTNDSMILNQPPGLGLKMGGTMQQQQQQQQLLQQQQQQMQQLNQPHPQQRLPQTIFPKQANVAFSAPVNITNKGFAGAANNSINNNNGLASYGGTGVTVAATSPGTSSAENNSLSPVPYVLNRGRRSNTGLEKVIERRQRRMIKNRESAARSRARKQAYTLELEAEIEKLKKTNQELQKKQAEMVEMQKNELKETSKRPWGSKRQCLRRTLTGPW.

The interval 1–29 (MGTHINFNNLGGGGHPGGEGSSNQMKPTG) is disordered. Positions 10-20 (LGGGGHPGGEG) are enriched in gly residues. 2 positions are modified to phosphoserine: Ser-39 and Ser-61. The residue at position 110 (Ser-110) is a Phosphoserine; by CPK32. Residues 133-153 (DGNMEGSSGGGGESNVPPGRQ) form a disordered region. Phosphothreonine is present on Thr-155. Positions 319-331 (SPGTSSAENNSLS) are enriched in polar residues. Positions 319-338 (SPGTSSAENNSLSPVPYVLN) are disordered. Positions 340–347 (GRRSNTGL) match the Nuclear localization signal motif. Residues 351–414 (IERRQRRMIK…KNELKETSKR (64 aa)) enclose the bZIP domain. Residues 353-372 (RRQRRMIKNRESAARSRARK) are basic motif. The stretch at 372-411 (KQAYTLELEAEIEKLKKTNQELQKKQAEMVEMQKNELKET) forms a coiled coil. Residues 379–393 (LEAEIEKLKKTNQEL) form a leucine-zipper region.

The protein belongs to the bZIP family. ABI5 subfamily. DNA-binding heterodimer. Interacts with CPK32 and the AFP proteins AFP1, AFP2 and AFP3. Interacts with FREE1 (via C-terminus). Phosphorylated by CPK4 and CPK11 in vitro. In terms of tissue distribution, expressed in roots, leaves, flowers and immatures siliques.

The protein localises to the nucleus. In terms of biological role, functions as a transcriptional activator in the ABA-inducible expression of LTI65/RD29B (AC Q04980). Binds specifically to the ABA-responsive element (ABRE) of the LTI65/RD29B (AC Q04980) gene promoter. Binds to the promoter of FREE1 and activates its transcription. This Arabidopsis thaliana (Mouse-ear cress) protein is ABSCISIC ACID-INSENSITIVE 5-like protein 7.